The following is a 510-amino-acid chain: ATP synthase subunit alpha (510 aa).

169-176 (GDRQTGKT) contributes to the ATP binding site.

This sequence belongs to the ATPase alpha/beta chains family. As to quaternary structure, F-type ATPases have 2 components, CF(1) - the catalytic core - and CF(0) - the membrane proton channel. CF(1) has five subunits: alpha(3), beta(3), gamma(1), delta(1), epsilon(1). CF(0) has three main subunits: a(1), b(2) and c(9-12). The alpha and beta chains form an alternating ring which encloses part of the gamma chain. CF(1) is attached to CF(0) by a central stalk formed by the gamma and epsilon chains, while a peripheral stalk is formed by the delta and b chains.

The protein localises to the cell inner membrane. The enzyme catalyses ATP + H2O + 4 H(+)(in) = ADP + phosphate + 5 H(+)(out). In terms of biological role, produces ATP from ADP in the presence of a proton gradient across the membrane. The alpha chain is a regulatory subunit. This Nitrobacter hamburgensis (strain DSM 10229 / NCIMB 13809 / X14) protein is ATP synthase subunit alpha.